We begin with the raw amino-acid sequence, 577 residues long: MNIQALINDKVSQALEAAGAPTGSPAAVRQSAKPQFGDYQANGVMGVAKQLGTNPREFAQKVLDVLDLDGIASKTEIAGPGFINIFLSEEFLAKQAEAALADPRLGVASEEAQTIVADYSAPNVAKEMHVGHLRSTIIGDAVVRTLEFLGHKVIRANHIGDWGTQFGMLIANLERVQQESGEVSMELADLEGFYRESKKLYDEDEEFAVKARGYVVKLQSGDEFCAEMWKKLVDVTMIQNQRNYDRLNVSLSRDDVMGESMYNDMLPKIVADLKAQGLAVEDDGAQVVFLEEFKNKDGEPMGVIVQKRDGGFLYTTTDIACAKYRYEELGADRVLYFIDSRQHQHLMQAWTIVRKAGYVPESVSLEHHAFGMMLGKDGKPFKTRAGGTVRLADLLDEAEVRAAQLIESKNPELAEDEKKAIANTVAMAAVKYADLSKHRTTDYVFDWDNMLAFEGNTAPYMQYAYTRVASVFAKAGVSMDDLQGEIKITDEKEKALIAKLMQFEEAVQSVAREGQPHIMCSYLFELAGQFSSFYEACPILVAEDEAVKQSRLKLAALTAKTIKQGLSLLGIDTLERM.

The 'HIGH' region signature appears at 122–132 (PNVAKEMHVGH).

Belongs to the class-I aminoacyl-tRNA synthetase family. As to quaternary structure, monomer.

The protein localises to the cytoplasm. The catalysed reaction is tRNA(Arg) + L-arginine + ATP = L-arginyl-tRNA(Arg) + AMP + diphosphate. In Vibrio vulnificus (strain YJ016), this protein is Arginine--tRNA ligase.